We begin with the raw amino-acid sequence, 247 residues long: Protein FAM133B (247 aa).

Disordered stretches follow at residues 19–38 (SRGP…NRPR) and 70–247 (KKEL…PDSP). Residues 70-80 (KKELEKHREKL) are compositionally biased toward basic and acidic residues. Phosphoserine is present on S82. The segment covering 89–102 (KKRQRKKKEKKKSG) has biased composition (basic residues). The span at 103–119 (RYSSSSSSSSDSSSSSS) shows a compositional bias: low complexity. The span at 128-140 (QGKRRKKKKNRSH) shows a compositional bias: basic residues. The segment covering 165–176 (KDGTEKEKDIKG) has biased composition (basic and acidic residues). Residues S191, S192, S194, and S196 each carry the phosphoserine modification. Residues 211 to 221 (SSEEREKATEK) show a composition bias toward basic and acidic residues. Basic residues predominate over residues 222 to 239 (TKKKKKHKKHSKKKKKKA).

It belongs to the FAM133 family.

The sequence is that of Protein FAM133B (FAM133B) from Homo sapiens (Human).